The following is a 322-amino-acid chain: Transcription factor WRKY45-2 (322 aa).

A disordered region spans residues 67–110; the sequence is GGEGSEVQSEVTCGGGASAGGKRKAPAANRKANCRRRTQQSSGN. The WRKY DNA-binding region spans 112–180; sequence VVVKNLDDGQ…YIGEHTCRDP (69 aa). A disordered region spans residues 256–284; it reads SDQEEVLSSLTPGSSAARGGGVAGPFGPD.

This sequence belongs to the WRKY group III family. Expressed in aleurone cells.

It localises to the nucleus. In terms of biological role, transcriptional activator involved in defense responses against pathogens. Acts as a positive regulator of defense responses against the rice blast fungus Magnaporthe oryzae. Acts as a positive regulator of defense responses against the bacterial blight Xanthomonas oryzae pv oryzae (Xoo) and the bacterial streak Xanthomonas oryzae pv oryzicola (Xoc). Acts as a positive regulator of abscisic acid (ABA) signaling that suppresses growth of seedlings. Acts as a negative regulator of salt stress response. Acts as a negative regulator of cold stress response. Acts as a negative regulator of drought stress response. This Oryza sativa subsp. indica (Rice) protein is Transcription factor WRKY45-2.